The primary structure comprises 96 residues: Large ribosomal subunit protein eL14 (96 aa).

This sequence belongs to the eukaryotic ribosomal protein eL14 family.

This chain is Large ribosomal subunit protein eL14, found in Saccharolobus islandicus (strain M.14.25 / Kamchatka #1) (Sulfolobus islandicus).